Reading from the N-terminus, the 260-residue chain is Phosphate import ATP-binding protein PstB 2 (260 aa).

Residues isoleucine 9 to valine 255 form the ABC transporter domain. An ATP-binding site is contributed by glycine 41–serine 48.

It belongs to the ABC transporter superfamily. Phosphate importer (TC 3.A.1.7) family. As to quaternary structure, the complex is composed of two ATP-binding proteins (PstB), two transmembrane proteins (PstC and PstA) and a solute-binding protein (PstS).

It is found in the cell inner membrane. It carries out the reaction phosphate(out) + ATP + H2O = ADP + 2 phosphate(in) + H(+). In terms of biological role, part of the ABC transporter complex PstSACB involved in phosphate import. Responsible for energy coupling to the transport system. The chain is Phosphate import ATP-binding protein PstB 2 from Nostoc sp. (strain PCC 7120 / SAG 25.82 / UTEX 2576).